We begin with the raw amino-acid sequence, 387 residues long: MDISKVDSTRALVNHWRIFRIMGIHPPGKRTFWGRHYTAYSMVWNVTFHICIWVSFSVNLLQSNSLETFCESLCVTMPHTLYMLKLINVRRMRGEMISSHWLLRLLDKRLGCADERQIIMAGIERAEFIFRTIFRGLACTVVLGIIYISASSEPTLMYPTWIPWNWKDSTSAYLATAMLHTTALMANATLVLNLSSYPGTYLILVSVHTKALALRVSKLGYGAPLPAVRMQAILVGYIHDHQIILRLFKSLERSLSMTCFLQFFSTACAQCTICYFLLFGNVGIMRFMNMLFLLVILTTETLLLCYTAELPCKEGESLLTAVYSCNWLSQSVNFRRLLLLMLARCQIPMILVSGVIVPISMKTFTVMIKGAYTMLTLLNEIRKTSLE.

At 1 to 40 (MDISKVDSTRALVNHWRIFRIMGIHPPGKRTFWGRHYTAY) the chain is on the cytoplasmic side. Residues 41–61 (SMVWNVTFHICIWVSFSVNLL) traverse the membrane as a helical segment. Residues 62-71 (QSNSLETFCE) are Extracellular-facing. The helical transmembrane segment at 72 to 92 (SLCVTMPHTLYMLKLINVRRM) threads the bilayer. Residues 93 to 127 (RGEMISSHWLLRLLDKRLGCADERQIIMAGIERAE) lie on the Cytoplasmic side of the membrane. Residues 128–148 (FIFRTIFRGLACTVVLGIIYI) traverse the membrane as a helical segment. The Extracellular segment spans residues 149–171 (SASSEPTLMYPTWIPWNWKDSTS). Residues 172–192 (AYLATAMLHTTALMANATLVL) traverse the membrane as a helical segment. The Cytoplasmic portion of the chain corresponds to 193-254 (NLSSYPGTYL…LRLFKSLERS (62 aa)). Residues 255 to 275 (LSMTCFLQFFSTACAQCTICY) traverse the membrane as a helical segment. Over 276 to 285 (FLLFGNVGIM) the chain is Extracellular. Residues 286–306 (RFMNMLFLLVILTTETLLLCY) traverse the membrane as a helical segment. Topologically, residues 307–336 (TAELPCKEGESLLTAVYSCNWLSQSVNFRR) are cytoplasmic. A helical transmembrane segment spans residues 337 to 357 (LLLLMLARCQIPMILVSGVIV). Residues 358–387 (PISMKTFTVMIKGAYTMLTLLNEIRKTSLE) lie on the Extracellular side of the membrane.

This sequence belongs to the insect chemoreceptor superfamily. Heteromeric odorant receptor channel (TC 1.A.69) family. Or2a subfamily. Interacts with Orco. Complexes exist early in the endomembrane system in olfactory sensory neurons (OSNs), coupling these complexes to the conserved ciliary trafficking pathway.

It is found in the cell membrane. Its function is as follows. Odorant receptor which mediates acceptance or avoidance behavior, depending on its substrates. The odorant receptor repertoire encodes a large collection of odor stimuli that vary widely in identity, intensity, and duration. May form a complex with Orco to form odorant-sensing units, providing sensitive and prolonged odorant signaling and calcium permeability. This Drosophila melanogaster (Fruit fly) protein is Putative odorant receptor 19b.